We begin with the raw amino-acid sequence, 75 residues long: Exodeoxyribonuclease 7 small subunit (75 aa).

Belongs to the XseB family. As to quaternary structure, heterooligomer composed of large and small subunits.

It is found in the cytoplasm. It catalyses the reaction Exonucleolytic cleavage in either 5'- to 3'- or 3'- to 5'-direction to yield nucleoside 5'-phosphates.. Its function is as follows. Bidirectionally degrades single-stranded DNA into large acid-insoluble oligonucleotides, which are then degraded further into small acid-soluble oligonucleotides. The polypeptide is Exodeoxyribonuclease 7 small subunit (Listeria innocua serovar 6a (strain ATCC BAA-680 / CLIP 11262)).